The following is a 180-amino-acid chain: MDQNFKLLDQAIKRFENFPNQGTLFYDITPVFSNPQLFNFVLTQMAQFIKAINAEAIVCPEARGFIFGGALASKTQLPLVLVRKANKLPGQLISASYDLEYRKHAVLEMSTTSLIQANNAKRCVIVDDVLATAGTVAAIDQLLKQLNGETVGYCFLIELKKLNGKAKLQPNVVSKILLHY.

This sequence belongs to the purine/pyrimidine phosphoribosyltransferase family. In terms of assembly, homodimer.

It localises to the cytoplasm. It carries out the reaction AMP + diphosphate = 5-phospho-alpha-D-ribose 1-diphosphate + adenine. The protein operates within purine metabolism; AMP biosynthesis via salvage pathway; AMP from adenine: step 1/1. In terms of biological role, catalyzes a salvage reaction resulting in the formation of AMP, that is energically less costly than de novo synthesis. The sequence is that of Adenine phosphoribosyltransferase from Mycoplasma genitalium (strain ATCC 33530 / DSM 19775 / NCTC 10195 / G37) (Mycoplasmoides genitalium).